The following is a 247-amino-acid chain: Probable proteasome subunit alpha type-5 (247 aa).

Residue Thr-55 is modified to Phosphothreonine.

It belongs to the peptidase T1A family. In terms of assembly, the 26S proteasome consists of a 20S proteasome core and two 19S regulatory subunits. The 20S proteasome core is composed of 28 subunits that are arranged in four stacked rings, resulting in a barrel-shaped structure. The two end rings are each formed by seven alpha subunits, and the two central rings are each formed by seven beta subunits. The catalytic chamber with the active sites is on the inside of the barrel.

The protein resides in the cytoplasm. It is found in the nucleus. Functionally, the proteasome is a multicatalytic proteinase complex which is characterized by its ability to cleave peptides with Arg, Phe, Tyr, Leu, and Glu adjacent to the leaving group at neutral or slightly basic pH. The proteasome has an ATP-dependent proteolytic activity. This is Probable proteasome subunit alpha type-5 (pup2) from Schizosaccharomyces pombe (strain 972 / ATCC 24843) (Fission yeast).